Consider the following 104-residue polypeptide: MKFLKNKAPANLVDNGRFVEAITCNKVKPNPSCVSNCLKFLSEVLAVEAITDSARNLATVSKSDILLFSLLQLSSNKQSGSSLPLFDLVFILLSTFFLFHNPCN.

The chain crosses the membrane as a helical span at residues 80 to 98 (GSSLPLFDLVFILLSTFFL).

Its subcellular location is the membrane. This is an uncharacterized protein from Saccharomyces cerevisiae (strain ATCC 204508 / S288c) (Baker's yeast).